A 285-amino-acid polypeptide reads, in one-letter code: tRNA-cytidine(32) 2-sulfurtransferase (285 aa).

The PP-loop motif motif lies at 48–53 (SGGKDS). Residues Cys122, Cys125, and Cys213 each contribute to the [4Fe-4S] cluster site.

Belongs to the TtcA family. As to quaternary structure, homodimer. It depends on Mg(2+) as a cofactor. Requires [4Fe-4S] cluster as cofactor.

The protein localises to the cytoplasm. The catalysed reaction is cytidine(32) in tRNA + S-sulfanyl-L-cysteinyl-[cysteine desulfurase] + AH2 + ATP = 2-thiocytidine(32) in tRNA + L-cysteinyl-[cysteine desulfurase] + A + AMP + diphosphate + H(+). Its pathway is tRNA modification. Functionally, catalyzes the ATP-dependent 2-thiolation of cytidine in position 32 of tRNA, to form 2-thiocytidine (s(2)C32). The sulfur atoms are provided by the cysteine/cysteine desulfurase (IscS) system. The chain is tRNA-cytidine(32) 2-sulfurtransferase from Cytophaga hutchinsonii (strain ATCC 33406 / DSM 1761 / CIP 103989 / NBRC 15051 / NCIMB 9469 / D465).